The sequence spans 744 residues: Cullin-3 (744 aa).

One can recognise a Cullin neddylation domain in the interval 677 to 736 (MELSAIIVRIMKTEGKLSHQQLLERTTKRTQSRLSLTPSILKRSIQLLIEKEYIQRNADD). Residue Lys-688 forms a Glycyl lysine isopeptide (Lys-Gly) (interchain with G-Cter in NEDD8) linkage.

It belongs to the cullin family. As to quaternary structure, component of a ubiquitin-protein ligase complex consisting of the cullin CUL3, the linker protein ELC1, the substrate receptor ELA1, and the RING protein HRT1. Post-translationally, neddylated; enhancing the ubiquitin-ligase activity.

Its pathway is protein modification; protein ubiquitination. Functionally, as part of the CRL3 E3 ubiquitin ligase complex; polyubiquitylates monoubiquitylated RNA polymerase II subunit RPO21 to trigger its proteolysis; plays a role in global genomic repair. This Saccharomyces cerevisiae (strain ATCC 204508 / S288c) (Baker's yeast) protein is Cullin-3 (CUL3).